Here is a 170-residue protein sequence, read N- to C-terminus: Small ribosomal subunit protein eS7 (170 aa).

The protein belongs to the eukaryotic ribosomal protein eS7 family. In terms of assembly, component of the small ribosomal subunit.

The protein localises to the cytoplasm. This is Small ribosomal subunit protein eS7 (RPS7) from Encephalitozoon cuniculi (strain GB-M1) (Microsporidian parasite).